We begin with the raw amino-acid sequence, 288 residues long: Transmembrane and coiled-coil domain-containing protein 5A (288 aa).

Residues 10–189 adopt a coiled-coil conformation; that stretch reads KKNIISLNMD…ELETGYLERE (180 aa). Residues 227–249 form a helical membrane-spanning segment; that stretch reads SLLFSTLFFIRLLGYLIFHLSFI.

Belongs to the TMCO5 family. As to expression, only detected in testis (at protein level).

The protein resides in the endoplasmic reticulum membrane. It is found in the nucleus membrane. In Mus musculus (Mouse), this protein is Transmembrane and coiled-coil domain-containing protein 5A (Tmco5a).